Consider the following 66-residue polypeptide: U10-theraphotoxin-Cg1a 1 (66 aa).

Positions 1 to 21 (MKTSVLFVIFGLALLFCLSFA) are cleaved as a signal peptide. The propeptide occupies 22–29 (AELEDTGR). 3 disulfide bridges follow: C31–C46, C38–C51, and C45–C58.

The protein belongs to the neurotoxin 10 (Hwtx-1) family. 29 (Jztx-13) subfamily. Expressed by the venom gland.

It localises to the secreted. Functionally, probable ion channel inhibitor. The sequence is that of U10-theraphotoxin-Cg1a 1 from Chilobrachys guangxiensis (Chinese earth tiger tarantula).